A 297-amino-acid chain; its full sequence is MLYQQISQNKRRTVILLFAFFVLLVVIGAAAGYLLADSYQLGAAFALIIGAIYAFSMIFQSTSLVMGMNKAKEITVNDAPDFFHIVEDMALVAQIPMPRVFIIDDPSLNAFATGSSPQNAAVAATTGLLKVMNREELEAVIGHEVSHIRNYDIRISTIAVALASAVTLISSIGGRMMWYSGGRRRDNDRNDNGFGAIMLIFSILSLILAPLAASLVQLAISRQREYLADASSVALTRNPEGMIRALQKLSNSQPMTHPVDDASAALYINEPRKKEKLSALFSTHPPIEDRIERLKHM.

2 consecutive transmembrane segments (helical) span residues 14 to 34 and 39 to 59; these read VILL…AGYL and YQLG…SMIF. His-143 is a binding site for Zn(2+). Residue Glu-144 is part of the active site. His-147 serves as a coordination point for Zn(2+). A run of 2 helical transmembrane segments spans residues 158–178 and 193–213; these read IAVA…RMMW and GFGA…PLAA. Glu-225 is a binding site for Zn(2+).

This sequence belongs to the peptidase M48B family. Zn(2+) is required as a cofactor.

The protein localises to the cell membrane. The protein is Protease HtpX homolog of Streptococcus equi subsp. equi (strain 4047).